The chain runs to 215 residues: MGQKINPTGFRLSVLKNWSSRWYTNTKKFSDFLNEDISVRQYLQKKLAHASVGSIIIERPSKNAKITIHTSRPGVVIGKKGEDIEILRRNVEKLMNVPVHINIEEIRKPEIDAQLIAASITQQLEKRIMFRRAMKRAIQNAMRLGAQGIKIMSSGRLNGIEIARTEWYREGRVPLHTLRAEVDYGTSEARTTYGIIGVKVWVFKGEQLGIKERQN.

A KH type-2 domain is found at 39–107 (VRQYLQKKLA…PVHINIEEIR (69 aa)).

It belongs to the universal ribosomal protein uS3 family. In terms of assembly, part of the 30S ribosomal subunit. Forms a tight complex with proteins S10 and S14.

Binds the lower part of the 30S subunit head. Binds mRNA in the 70S ribosome, positioning it for translation. The chain is Small ribosomal subunit protein uS3 from Nitrosomonas europaea (strain ATCC 19718 / CIP 103999 / KCTC 2705 / NBRC 14298).